Reading from the N-terminus, the 626-residue chain is Janus kinase and microtubule-interacting protein 1 (626 aa).

A mediates association with microtubules region spans residues 1-365 (MSKKGRSKGE…KIKNLTRENV (365 aa)). Coiled coils occupy residues 19–254 (VQMA…REAE) and 284–413 (ERDV…DDLS). The segment at 365-626 (VEMKEKLSAQ…ILFEPKLKFM (262 aa)) is mediates interaction with TYK2 and GABBR1. Position 382 is a phosphoserine (serine 382). A compositionally biased stretch (polar residues) spans 452-461 (ETLSETSCNT). The segment at 452–480 (ETLSETSCNTDRTDRAPATPEEDLDDTTT) is disordered. Threonine 470 carries the post-translational modification Phosphothreonine. The stretch at 490–604 (QLTREYQALQ…EFRVLELEVR (115 aa)) forms a coiled coil.

Belongs to the JAKMIP family. As to quaternary structure, homodimer. Forms a complex with GABBR1 and KIF5B/kinesin-1. Interacts with JAK1 and TYK2. In terms of processing, phosphorylated.

Its subcellular location is the cytoplasm. The protein localises to the cytoskeleton. It localises to the membrane. Functionally, associates with microtubules and may play a role in the microtubule-dependent transport of the GABA-B receptor. May play a role in JAK1 signaling and regulate microtubule cytoskeleton rearrangements. This is Janus kinase and microtubule-interacting protein 1 (JAKMIP1) from Bos taurus (Bovine).